We begin with the raw amino-acid sequence, 447 residues long: Probable 7-dehydrocholesterol reductase (447 aa).

Transmembrane regions (helical) follow at residues 24 to 44 (LTTAAMFMFCPFIILVFYLIT), 71 to 91 (IPSFKINVLGACLLWIVFQLI), 102 to 124 (FVPHYVGGIKAGHITPAGNLVYY), 133 to 153 (IITHVLVIMSCYYGLFSPTII), 157 to 177 (WGSIFWSVNIIGYLITFLAYF), 244 to 264 (YVSNSMILVIILQLIYIVDFF), 281 to 301 (FGWMLAWGDTVWLPFGYTLQA), and 309 to 329 (IDLSTGFFNLVFVMGIIGYII). Residues lysine 337, arginine 341, isoleucine 367, tryptophan 372, and 379–380 (NY) contribute to the NADP(+) site. The helical transmembrane segment at 393 to 413 (ACGFSHFIPYFYCVYMTILLV) threads the bilayer. Residues aspartate 419, 423-427 (CSRKY), and tyrosine 434 contribute to the NADP(+) site.

The protein belongs to the ERG4/ERG24 family.

It localises to the membrane. It carries out the reaction cholesterol + NADP(+) = 7-dehydrocholesterol + NADPH + H(+). It participates in steroid biosynthesis; cholesterol biosynthesis. Functionally, catalyzes the last step of the cholesterol synthesis pathway, which transforms cholesta-5,7-dien-3beta-ol (7-dehydrocholesterol,7-DHC) into cholesterol by reducing the C7-C8 double bond of its sterol core. This is Probable 7-dehydrocholesterol reductase (DHCR7) from Acanthamoeba polyphaga (Amoeba).